The following is a 343-amino-acid chain: 3-dehydroquinate synthase (343 aa).

Residues 61–66 (SGEKYK), 95–99 (GVISD), 119–120 (TT), Lys-132, Lys-141, and 159–162 (FLKT) each bind NAD(+). Positions 174, 231, and 248 each coordinate Zn(2+).

It belongs to the sugar phosphate cyclases superfamily. Dehydroquinate synthase family. Requires Co(2+) as cofactor. The cofactor is Zn(2+). NAD(+) is required as a cofactor.

It localises to the cytoplasm. It catalyses the reaction 7-phospho-2-dehydro-3-deoxy-D-arabino-heptonate = 3-dehydroquinate + phosphate. The protein operates within metabolic intermediate biosynthesis; chorismate biosynthesis; chorismate from D-erythrose 4-phosphate and phosphoenolpyruvate: step 2/7. Catalyzes the conversion of 3-deoxy-D-arabino-heptulosonate 7-phosphate (DAHP) to dehydroquinate (DHQ). The chain is 3-dehydroquinate synthase from Helicobacter pylori (strain P12).